Reading from the N-terminus, the 459-residue chain is ATP-dependent protease ATPase subunit HslU (459 aa).

Residues Val18, 60–65 (GVGKTE), Asp272, Glu337, and Arg409 contribute to the ATP site.

The protein belongs to the ClpX chaperone family. HslU subfamily. A double ring-shaped homohexamer of HslV is capped on each side by a ring-shaped HslU homohexamer. The assembly of the HslU/HslV complex is dependent on binding of ATP.

It is found in the cytoplasm. ATPase subunit of a proteasome-like degradation complex; this subunit has chaperone activity. The binding of ATP and its subsequent hydrolysis by HslU are essential for unfolding of protein substrates subsequently hydrolyzed by HslV. HslU recognizes the N-terminal part of its protein substrates and unfolds these before they are guided to HslV for hydrolysis. This is ATP-dependent protease ATPase subunit HslU from Thermoanaerobacter pseudethanolicus (strain ATCC 33223 / 39E) (Clostridium thermohydrosulfuricum).